The primary structure comprises 175 residues: NADH-quinone oxidoreductase subunit I 1 (175 aa).

4Fe-4S ferredoxin-type domains are found at residues 44-74 (LNRWPDGLEKCIGCELCAWACPADAIFVESA) and 90-119 (RVYQINYLRCIGCGFCIEACPTRALTMIND). Positions 54, 57, 60, 64, 99, 102, 105, and 109 each coordinate [4Fe-4S] cluster.

This sequence belongs to the complex I 23 kDa subunit family. In terms of assembly, NDH-1 is composed of 14 different subunits. Subunits NuoA, H, J, K, L, M, N constitute the membrane sector of the complex. The cofactor is [4Fe-4S] cluster.

It localises to the cell membrane. The catalysed reaction is a quinone + NADH + 5 H(+)(in) = a quinol + NAD(+) + 4 H(+)(out). In terms of biological role, NDH-1 shuttles electrons from NADH, via FMN and iron-sulfur (Fe-S) centers, to quinones in the respiratory chain. The immediate electron acceptor for the enzyme in this species is believed to be menaquinone. Couples the redox reaction to proton translocation (for every two electrons transferred, four hydrogen ions are translocated across the cytoplasmic membrane), and thus conserves the redox energy in a proton gradient. The chain is NADH-quinone oxidoreductase subunit I 1 from Mycolicibacterium paratuberculosis (strain ATCC BAA-968 / K-10) (Mycobacterium paratuberculosis).